A 382-amino-acid chain; its full sequence is MSTWLLPENIADVLPSEARKIEELRRRLLDRFRSYGYEMVMPPLLEYLESLLTSGGADLRLRTFKLVDQLSGRTLGLRADITPQVARIDAHLLNRQGVTRLCYAGHVMHTRPRGLHATREQIQIGAEIYGHAGLEADLEIQQLMLDALHLAGLSRIRLDLCHAGVLAALLARDAQAAERGESLYDALSGKDVPLLNELTDDLGADTRAALRALPHLYGDASVLDEARARLPVLPEITRALDDLAQLAAQAKGVEVAIDLADLRGYAYHSGAMFTAYIDGVPNAIARGGRYDHVGQAYGRARPATGFSLDLRELARISPIEARGTAILAPWAQDDALGAAVAALRDAGEVVIQALPGHDHVLDEFACDRSLVERNGAWVVEPR.

It belongs to the class-II aminoacyl-tRNA synthetase family. HisZ subfamily. In terms of assembly, heteromultimer composed of HisG and HisZ subunits.

The protein resides in the cytoplasm. It functions in the pathway amino-acid biosynthesis; L-histidine biosynthesis; L-histidine from 5-phospho-alpha-D-ribose 1-diphosphate: step 1/9. Required for the first step of histidine biosynthesis. May allow the feedback regulation of ATP phosphoribosyltransferase activity by histidine. The chain is ATP phosphoribosyltransferase regulatory subunit from Burkholderia ambifaria (strain ATCC BAA-244 / DSM 16087 / CCUG 44356 / LMG 19182 / AMMD) (Burkholderia cepacia (strain AMMD)).